Here is a 466-residue protein sequence, read N- to C-terminus: Tyrosinase HcTyr1 (466 aa).

Positions 43, 78, 87, 211, 215, and 238 each coordinate Cu cation.

The protein belongs to the tyrosinase family. Monomer. Formation of a dimer is observed when the protein is in its holo-form. Requires Cu(2+) as cofactor. In terms of processing, in vitro, the C-terminal lid-domain is slowly cleaved off in an autoprocessive time dependent manner, leading to the formation of cleaved-HcTyr1. The processing rate is not influenced by factors such as pH and added metal ions.

It catalyses the reaction L-tyrosine + O2 = L-dopaquinone + H2O. The enzyme catalyses 2 L-tyrosine + O2 = 2 L-dopa. It carries out the reaction 2 L-dopa + O2 = 2 L-dopaquinone + 2 H2O. Cleavage of the lid-domain increases activity levels, affinity for substrate and turnover rate. Exhibits high saline tolerance. Its function is as follows. Copper-containing oxidase that catalyzes the conversion of L-tyrosine to L-dopa and then to L-dopaquinone. Can use various phenols such as p-coumaric acid, phenol, pyrocatechol, syringol or pyrogallol. Accepts several of the constituents of lignin and potentially participates in lignin functionalization. This Hahella sp. (strain CCB-MM4) protein is Tyrosinase HcTyr1.